The chain runs to 201 residues: Ran-specific GTPase-activating protein 1 (201 aa).

Basic and acidic residues-rich tracts occupy residues 1–17 (MSSE…EEAA) and 32–66 (KKAE…IHFE). Residues 1–66 (MSSEDKKPVV…APESPDIHFE (66 aa)) form a disordered region. Ser-60 bears the Phosphoserine mark. The region spanning 64–200 (HFEPVVHLEK…FEKAQEINKK (137 aa)) is the RanBD1 domain.

This sequence belongs to the RANBP1 family. In terms of assembly, interacts with GSP1 and PRP20.

The protein localises to the cytoplasm. The protein resides in the nucleus. Important for the export of protein containing nuclear export signal (NES) out of the nucleus. Stimulates the GTPase activity of GSP1 and GSP2. The chain is Ran-specific GTPase-activating protein 1 (YRB1) from Saccharomyces cerevisiae (strain ATCC 204508 / S288c) (Baker's yeast).